Consider the following 249-residue polypeptide: AA9 family lytic polysaccharide monooxygenase A (249 aa).

The N-terminal stretch at 1–19 (MRGPLCFTLIAIAVTSVVA) is a signal peptide. 2 residues coordinate Cu(2+): histidine 20 and histidine 97. The cysteines at positions 60 and 183 are disulfide-linked. Histidine 163 is an O2 binding site. Residue tyrosine 180 coordinates Cu(2+).

The protein belongs to the polysaccharide monooxygenase AA9 family. Cu(2+) is required as a cofactor.

Its subcellular location is the secreted. The enzyme catalyses [(1-&gt;4)-beta-D-glucosyl]n+m + reduced acceptor + O2 = 4-dehydro-beta-D-glucosyl-[(1-&gt;4)-beta-D-glucosyl]n-1 + [(1-&gt;4)-beta-D-glucosyl]m + acceptor + H2O.. Its function is as follows. Lytic polysaccharide monooxygenase (LPMO) that depolymerizes crystalline and amorphous polysaccharides via the oxidation of scissile alpha- or beta-(1-4)-glycosidic bonds, yielding C4 oxidation products. Catalysis by LPMOs requires the reduction of the active-site copper from Cu(II) to Cu(I) by a reducing agent and H(2)O(2) or O(2) as a cosubstrate. Active on cellulose and cello-oligosaccharides, as well as plant cell wall-derived hemicellulosic polysaccharides. Also active on cello-oligosaccharides such as cellohexaose, cellopentaose or cellotetraose. The polypeptide is AA9 family lytic polysaccharide monooxygenase A (Armillaria gallica (Bulbous honey fungus)).